We begin with the raw amino-acid sequence, 412 residues long: uncharacterized protein (412 aa).

The next 11 membrane-spanning stretches (helical) occupy residues 17–37 (LLLALALTMGVFAAGSEELVI), 54–74 (VLALSISIYGVMIFIGAPLLV), 91–111 (MIFIIGTVICALAQNIFFFFL), 112–132 (GRALSGLAAGAFVPTAYAVVG), 146–166 (LIVSSWSLALIFGVPLGSFIG), 173–193 (WTFWIFALMGVLVVLLILLEM), 225–245 (VYITITFCNMIGFYGMYSFLG), 257–277 (TAAGLFIMIYGIGFSMSVITG), 299–319 (LLACLPYAPASMFLLIASLFI), 346–366 (VMVFYSLASNLAVTLGSALMG), and 375–395 (AAVGLICAAITVLGFVLSVFA).

Belongs to the major facilitator superfamily.

Its subcellular location is the cell membrane. This is an uncharacterized protein from Bacillus subtilis (strain 168).